The chain runs to 443 residues: Crinkler effector protein 161 (443 aa).

The N-terminal stretch at 1–17 is a signal peptide; that stretch reads MVKLSCVIVGVPGDPFQ. Positions 18–56 are LQLFLAK domain; the sequence is VEIDEICELVAGLKDAIKKEKPDSIKCDADKLQLFKAAK. The interval 57–126 is DWL domain; it reads EDRTFSASGA…GMESPSISQI (70 aa). The short motif at 127–133 is the HVLVXXP motif element; the sequence is HVLVVLP. Residues 134 to 439 are effector domain; sequence EDSESEGGTS…RSMPGYCCAN (306 aa). Short sequence motifs (nuclear localization signal) lie at residues 161–170 and 384–393; these read ADKKRKRYWH and HQPLKRLKLS.

The protein belongs to the Crinkler effector family.

It localises to the secreted. The protein localises to the host nucleus. Functionally, secreted effector that exhibits strong cell death suppression activity and suppresses cell death induced by a variety of effectors including CRN63, Avh241 and Avr3a. Protects host plants from biotic and abiotic stresses such as salinity and drought by up-regulation of many defense-related genes, including ABC transporters, Cytochrome P450 monooxygenases and receptor-like kinases (RLKs). Also enhances resistance to Phytophtora pathogens. This chain is Crinkler effector protein 161, found in Phytophthora sojae (strain P6497) (Soybean stem and root rot agent).